The chain runs to 240 residues: Vacuolar-sorting protein SNF7 (240 aa).

T72 carries the phosphothreonine modification. A phosphoserine mark is found at S119 and S193. The interval 193–240 is disordered; that stretch reads SENKVSLPSVPSNKIKQSENSVKDGEEEEDEEDEDEKALRELQAEMGL. Over residues 195–212 the composition is skewed to polar residues; sequence NKVSLPSVPSNKIKQSEN. The span at 217-228 shows a compositional bias: acidic residues; sequence GEEEEDEEDEDE. K229 is covalently cross-linked (Glycyl lysine isopeptide (Lys-Gly) (interchain with G-Cter in ubiquitin)). The segment covering 229–240 has biased composition (basic and acidic residues); sequence KALRELQAEMGL.

The protein belongs to the SNF7 family. In terms of assembly, core component of the ESCRT-III complex (endosomal sorting required for transport complex III). ESCRT-III appears to be sequentially assembled as a flat lattice on the endosome membrane and forms a transient 450 kDa complex that contains DID4, oligomerized SNF7, VPS20 and VPS24. SNF7 polymerizes into spirals at the surface of lipid bilayers. SNF7 polymerization is nucleated by association of SNF7 with VPS20; the process is terminated through association of VPS24, possibly by capping the SNF7 filament. Interacts with VTA1; the interaction requires DID2. Interacts with BRO1. Interacts with DOA4. Interacts with HEH1 and HEH2. Interacts with RIM20 and YGR122W.

It localises to the cytoplasm. The protein resides in the endosome membrane. Its subcellular location is the nucleus envelope. Acts a component of the ESCRT-III complex required for the sorting and concentration of proteins resulting in the entry of these proteins into the invaginating vesicles of the multivesicular body (MVB). The sequential action of ESCRT-0, -I, and -II together with the ordered assembly of ESCRT-III links membrane invagination to cargo sorting. Membrane scission in the neck of the growing vesicle releases mature, cargo-laden ILVs into the lumen. ESCRT-III is critical for late steps in MVB sorting, such as membrane invagination and final cargo sorting and recruitment of late-acting components of the sorting machinery. SNF7 is the most abundant ESCRT-III subunit which forms membrane-sculpting filaments with 30 Angstrom periodicity and a exposed cationic membrane-binding surface. Its activation requires a prominent conformational rearrangement to expose protein-membrane and protein-protein interfaces. SNF7 filaments then form spirals that could function as spiral springs. The elastic expansion of compressed SNF7 spirals generates an area difference between the two sides of the membrane and thus curvature which could be the origin of membrane deformation leading eventually to fission. SNF7 recruits BRO1, which in turn recruits DOA4, which deubiquitinates cargos before their enclosure within MVB vesicles. ESCRT-III is also recruited to the nuclear envelope (NE) by integral INM proteins to surveil and clear defective nuclear pore complex (NPC) assembly intermediates to ensure the fidelity of NPC assembly. In Saccharomyces cerevisiae (strain ATCC 204508 / S288c) (Baker's yeast), this protein is Vacuolar-sorting protein SNF7.